The chain runs to 216 residues: Protein Syd (216 aa).

This sequence belongs to the Syd family.

The protein resides in the cell inner membrane. Functionally, interacts with the SecY protein in vivo. May bind preferentially to an uncomplexed state of SecY, thus functioning either as a chelating agent for excess SecY in the cell or as a regulatory factor that negatively controls the translocase function. The chain is Protein Syd from Shewanella baltica (strain OS185).